The sequence spans 184 residues: MSWRSESIWIEFITGSRKTSNFCWAFILFLGSLGFLLVGTSSYLGRNVISLFPSQQIIFFPQGIVMSFYGIAGLFISCYLWCTILWNVGSGYDLFDRKEGIVRIFRWGFPGKSRRIFLRFFMKDIQSIRIEVKEGVSARRVLYMEIRGQGAIPLIRTDENFTTREIEQKAAELAYFLRVPIEVF.

2 helical membrane passes run 22–42 and 57–77; these read FCWA…GTSS and IIFF…LFIS.

Belongs to the Ycf4 family.

The protein localises to the plastid. Its subcellular location is the chloroplast thylakoid membrane. Seems to be required for the assembly of the photosystem I complex. This is Photosystem I assembly protein Ycf4 from Crucihimalaya wallichii (Rock-cress).